We begin with the raw amino-acid sequence, 590 residues long: V-type ATP synthase alpha chain (590 aa).

234–241 (GGFGAGKT) contacts ATP.

Belongs to the ATPase alpha/beta chains family.

It catalyses the reaction ATP + H2O + 4 H(+)(in) = ADP + phosphate + 5 H(+)(out). Functionally, produces ATP from ADP in the presence of a proton gradient across the membrane. The V-type alpha chain is a catalytic subunit. This chain is V-type ATP synthase alpha chain, found in Halothermothrix orenii (strain H 168 / OCM 544 / DSM 9562).